The primary structure comprises 216 residues: Somatotropin (216 aa).

Positions 1 to 26 (MAAGPRNSMLLVFALLSLPWPQEVGA) are cleaved as a signal peptide. His45 lines the Zn(2+) pocket. A disulfide bridge connects residues Cys78 and Cys189. Ser131 carries the phosphoserine modification. Glu198 lines the Zn(2+) pocket. Cys206 and Cys214 are disulfide-bonded.

This sequence belongs to the somatotropin/prolactin family.

The protein localises to the secreted. Plays an important role in growth control. Its major role in stimulating body growth is to stimulate the liver and other tissues to secrete IGF1. It stimulates both the differentiation and proliferation of myoblasts. It also stimulates amino acid uptake and protein synthesis in muscle and other tissues. The protein is Somatotropin (GH1) of Neovison vison (American mink).